The primary structure comprises 647 residues: Acetyl-coenzyme A synthetase (647 aa).

CoA-binding positions include 190–193 (RGGR), Thr-308, and Asn-332. ATP is bound by residues 384–386 (GEP), 408–413 (DTWWQT), Asp-497, and Arg-512. CoA is bound at residue Ser-520. Arg-523 contributes to the ATP binding site. 3 residues coordinate Mg(2+): Val-534, His-536, and Val-539. A CoA-binding site is contributed by Arg-581. Lys-606 is modified (N6-acetyllysine).

The protein belongs to the ATP-dependent AMP-binding enzyme family. Mg(2+) serves as cofactor. Acetylated. Deacetylation by the SIR2-homolog deacetylase activates the enzyme.

It catalyses the reaction acetate + ATP + CoA = acetyl-CoA + AMP + diphosphate. Its function is as follows. Catalyzes the conversion of acetate into acetyl-CoA (AcCoA), an essential intermediate at the junction of anabolic and catabolic pathways. AcsA undergoes a two-step reaction. In the first half reaction, AcsA combines acetate with ATP to form acetyl-adenylate (AcAMP) intermediate. In the second half reaction, it can then transfer the acetyl group from AcAMP to the sulfhydryl group of CoA, forming the product AcCoA. The protein is Acetyl-coenzyme A synthetase of Parvibaculum lavamentivorans (strain DS-1 / DSM 13023 / NCIMB 13966).